A 142-amino-acid chain; its full sequence is Ig heavy chain V region IR2 (142 aa).

The N-terminal stretch at 1-19 (MDLRLTYVFIVAILKGVLC) is a signal peptide. Residues 20-133 (EVKLEESGGG…YSENWFVYWG (114 aa)) form the Ig-like domain.

The protein is Ig heavy chain V region IR2 of Rattus norvegicus (Rat).